A 375-amino-acid chain; its full sequence is MSTAGKVIKCKAAVLWEPKKPFSIEEVEVAPPKAHEVRIKILATGICRSDDHVITGALVRPFPIILGHEAAGVVESVGEGVTSVKPGDKVIPLFVPQCGECSACLSTKGNLCSKNDIGSASGLMPDGTTRFTCKGKAIHHFIGTSTFTEYTVVHETAVAKIAAAAPLEKVCLIGCGFSTGYGAAVQTAKVEPGSTCAVFGLGGVGLSVVMGCKAAGASRIIAIDINKDKFAKAKELGATDCVNPKDFTKPIHEVLMEMTGLGVDYSFEVIGHTETMAAALASCHFNYGVSVILGVPPAAEKISFDPMLLFSGRTWKGSVFGGWKSKDAVPKLVADYMEKKFVLEPLITHTLPFIKINEGFDLLRKGKSIRSVLVF.

S2 carries the post-translational modification N-acetylserine. Residues C47, H68, C98, C101, C104, C112, and C175 each contribute to the Zn(2+) site. NAD(+) contacts are provided by residues 200–205 (GLGGVG), D224, K229, 293–295 (LGV), and R370.

Belongs to the zinc-containing alcohol dehydrogenase family. Class-I subfamily. Homodimer. Zn(2+) is required as a cofactor.

Its subcellular location is the cytoplasm. The enzyme catalyses a primary alcohol + NAD(+) = an aldehyde + NADH + H(+). It catalyses the reaction a secondary alcohol + NAD(+) = a ketone + NADH + H(+). In Apteryx australis (Southern brown kiwi), this protein is Alcohol dehydrogenase 1 (ADH1).